The primary structure comprises 492 residues: N-succinylglutamate 5-semialdehyde dehydrogenase (492 aa).

Residue 220–225 participates in NAD(+) binding; it reads GSASTG. Active-site residues include E243 and C277.

The protein belongs to the aldehyde dehydrogenase family. AstD subfamily.

The enzyme catalyses N-succinyl-L-glutamate 5-semialdehyde + NAD(+) + H2O = N-succinyl-L-glutamate + NADH + 2 H(+). It functions in the pathway amino-acid degradation; L-arginine degradation via AST pathway; L-glutamate and succinate from L-arginine: step 4/5. Its function is as follows. Catalyzes the NAD-dependent reduction of succinylglutamate semialdehyde into succinylglutamate. In Salmonella gallinarum (strain 287/91 / NCTC 13346), this protein is N-succinylglutamate 5-semialdehyde dehydrogenase.